The sequence spans 1755 residues: Transposon Ty1-ER2 Gag-Pol polyprotein (1755 aa).

3 stretches are compositionally biased toward polar residues: residues 1–10 (MESQQLSNYP), 48–60 (TKANSQQTTTPAS), and 127–152 (QSQFPQYPSSVGTPLSTPSPESGNTF). Disordered regions lie at residues 1–93 (MESQ…MMTQ), 126–173 (PQSQ…RPPP), and 352–421 (GSRN…SKST). Positions 153–165 (TDSSSADSDMTST) are enriched in low complexity. The interval 299–401 (NNGIHINNKV…NSKSKTARAH (103 aa)) is RNA-binding. Over residues 402–418 (NVSTSNNSPSTDNDSIS) the composition is skewed to low complexity. D461 (for protease activity; shared with dimeric partner) is an active-site residue. The integrase-type zinc finger-like stretch occupies residues 583–640 (NVHTSESTRKYPYPFIHRMLAHANAQTIRYSLKNNTITYFNESDVDWSSAIDYQCPDC). In terms of domain architecture, Integrase catalytic spans 660–835 (NSYEPFQYLH…AGLDISTLLP (176 aa)). 2 residues coordinate Mg(2+): D671 and D736. Positions 958-1170 (AVSPTDSTPP…SSLGGIGDSN (213 aa)) are disordered. The span at 960 to 969 (SPTDSTPPST) shows a compositional bias: low complexity. A compositionally biased stretch (polar residues) spans 1005–1015 (STPQISDIEST). The segment covering 1038 to 1053 (ESSHASKSKDFRHSDS) has biased composition (basic and acidic residues). 2 stretches are compositionally biased toward polar residues: residues 1054-1082 (YSDNETNHTNVPISSTGGTNNKTVPQTSE) and 1095-1106 (SIDTSSSESNSL). The short motif at 1178–1212 (KKRSLEDNETEIKVSRDTWNTKNMRSLEPPRSKKR) is the Bipartite nuclear localization signal element. The 139-residue stretch at 1338–1476 (NNYYITQLDI…DILGLEIKYQ (139 aa)) folds into the Reverse transcriptase Ty1/copia-type domain. Residues D1346, D1427, D1428, D1610, E1652, and D1685 each coordinate Mg(2+). The RNase H Ty1/copia-type domain occupies 1610-1752 (DASYGNQPYY…IKTFKLLTNK (143 aa)).

The capsid protein forms a homotrimer, from which the VLPs are assembled. The protease is a homodimer, whose active site consists of two apposed aspartic acid residues. In terms of processing, initially, virus-like particles (VLPs) are composed of the structural unprocessed proteins Gag and Gag-Pol, and also contain the host initiator methionine tRNA (tRNA(i)-Met) which serves as a primer for minus-strand DNA synthesis, and a dimer of genomic Ty RNA. Processing of the polyproteins occurs within the particle and proceeds by an ordered pathway, called maturation. First, the protease (PR) is released by autocatalytic cleavage of the Gag-Pol polyprotein yielding capsid protein p45 and a Pol-p154 precursor protein. This cleavage is a prerequisite for subsequent processing of Pol-p154 at the remaining sites to release the mature structural and catalytic proteins. Maturation takes place prior to the RT reaction and is required to produce transposition-competent VLPs.

It is found in the cytoplasm. It localises to the nucleus. The catalysed reaction is DNA(n) + a 2'-deoxyribonucleoside 5'-triphosphate = DNA(n+1) + diphosphate. It carries out the reaction Endonucleolytic cleavage to 5'-phosphomonoester.. Its function is as follows. Capsid protein (CA) is the structural component of the virus-like particle (VLP), forming the shell that encapsulates the retrotransposons dimeric RNA genome. The particles are assembled from trimer-clustered units and there are holes in the capsid shells that allow for the diffusion of macromolecules. CA also has nucleocapsid-like chaperone activity, promoting primer tRNA(i)-Met annealing to the multipartite primer-binding site (PBS), dimerization of Ty1 RNA and initiation of reverse transcription. Functionally, the aspartyl protease (PR) mediates the proteolytic cleavages of the Gag and Gag-Pol polyproteins after assembly of the VLP. Reverse transcriptase/ribonuclease H (RT) is a multifunctional enzyme that catalyzes the conversion of the retro-elements RNA genome into dsDNA within the VLP. The enzyme displays a DNA polymerase activity that can copy either DNA or RNA templates, and a ribonuclease H (RNase H) activity that cleaves the RNA strand of RNA-DNA heteroduplexes during plus-strand synthesis and hydrolyzes RNA primers. The conversion leads to a linear dsDNA copy of the retrotransposon that includes long terminal repeats (LTRs) at both ends. In terms of biological role, integrase (IN) targets the VLP to the nucleus, where a subparticle preintegration complex (PIC) containing at least integrase and the newly synthesized dsDNA copy of the retrotransposon must transit the nuclear membrane. Once in the nucleus, integrase performs the integration of the dsDNA into the host genome. This Saccharomyces cerevisiae (strain ATCC 204508 / S288c) (Baker's yeast) protein is Transposon Ty1-ER2 Gag-Pol polyprotein (TY1B-ER2).